Here is a 351-residue protein sequence, read N- to C-terminus: DNA nickase (351 aa).

Positions 241, 245, and 303 each coordinate Fe cation.

Its function is as follows. Acts as a DNA nickase. The sequence is that of DNA nickase from Nostoc sp. (strain PCC 7120 / SAG 25.82 / UTEX 2576).